The primary structure comprises 248 residues: Deoxyribose-phosphate aldolase (248 aa).

The Proton donor/acceptor role is filled by aspartate 106. Lysine 168 (schiff-base intermediate with acetaldehyde) is an active-site residue. Lysine 197 (proton donor/acceptor) is an active-site residue.

The protein belongs to the DeoC/FbaB aldolase family. DeoC type 1 subfamily.

Its subcellular location is the cytoplasm. The catalysed reaction is 2-deoxy-D-ribose 5-phosphate = D-glyceraldehyde 3-phosphate + acetaldehyde. The protein operates within carbohydrate degradation; 2-deoxy-D-ribose 1-phosphate degradation; D-glyceraldehyde 3-phosphate and acetaldehyde from 2-deoxy-alpha-D-ribose 1-phosphate: step 2/2. Catalyzes a reversible aldol reaction between acetaldehyde and D-glyceraldehyde 3-phosphate to generate 2-deoxy-D-ribose 5-phosphate. This is Deoxyribose-phosphate aldolase from Sinorhizobium medicae (strain WSM419) (Ensifer medicae).